Consider the following 465-residue polypeptide: Uridine kinase-like protein 5 (465 aa).

The tract at residues 26–230 (LKQPFVIGVA…IVQHIRTKLC (205 aa)) is uridine kinase. The uracil phosphoribosyltransferase stretch occupies residues 240–465 (NIFIISSTFQ…SLSTNLKLRS (226 aa)). GTP-binding positions include Lys264, Arg273, and 307 to 310 (CKRL). Residues Arg317 and Arg342 each coordinate 5-phospho-alpha-D-ribose 1-diphosphate. Arg362 lines the GTP pocket. 5-phospho-alpha-D-ribose 1-diphosphate-binding positions include Asp368, 373–376 (SGYS), and Glu439. 438–440 (GEF) serves as a coordination point for uracil.

The protein in the N-terminal section; belongs to the uridine kinase family. This sequence in the C-terminal section; belongs to the UPRTase family. Mg(2+) is required as a cofactor.

It carries out the reaction UMP + diphosphate = 5-phospho-alpha-D-ribose 1-diphosphate + uracil. The enzyme catalyses cytidine + ATP = CMP + ADP + H(+). It catalyses the reaction uridine + ATP = UMP + ADP + H(+). The protein operates within pyrimidine metabolism; UMP biosynthesis via salvage pathway; UMP from uracil: step 1/1. It functions in the pathway pyrimidine metabolism; CTP biosynthesis via salvage pathway; CTP from cytidine: step 1/3. Its pathway is pyrimidine metabolism; UMP biosynthesis via salvage pathway; UMP from uridine: step 1/1. Allosterically activated by GTP. In terms of biological role, involved in the pyrimidine salvage pathway. The polypeptide is Uridine kinase-like protein 5 (UKL5) (Arabidopsis thaliana (Mouse-ear cress)).